The sequence spans 206 residues: Dual specificity phosphatase 29 (206 aa).

A Tyrosine-protein phosphatase domain is found at 47–194; it reads HVNQVWPSVY…LRALDITLQE (148 aa). 138–145 contributes to the substrate binding site; that stretch reads HCVMGRSR. C139 functions as the Phosphocysteine intermediate in the catalytic mechanism.

Belongs to the protein-tyrosine phosphatase family. Non-receptor class dual specificity subfamily.

It is found in the cytoplasm. The protein resides in the nucleus. The catalysed reaction is O-phospho-L-tyrosyl-[protein] + H2O = L-tyrosyl-[protein] + phosphate. It catalyses the reaction O-phospho-L-seryl-[protein] + H2O = L-seryl-[protein] + phosphate. It carries out the reaction O-phospho-L-threonyl-[protein] + H2O = L-threonyl-[protein] + phosphate. Its function is as follows. Dual specificity phosphatase able to dephosphorylate phosphotyrosine, phosphoserine and phosphothreonine residues within the same substrate, with a preference for phosphotyrosine as a substrate. Involved in the modulation of AMPK and MAPK1/2 signaling pathways. This is Dual specificity phosphatase 29 (dusp29) from Gasterosteus aculeatus (Three-spined stickleback).